Consider the following 151-residue polypeptide: Small ribosomal subunit protein uS15z (151 aa).

This sequence belongs to the universal ribosomal protein uS15 family.

The sequence is that of Small ribosomal subunit protein uS15z (RPS13A) from Arabidopsis thaliana (Mouse-ear cress).